A 1007-amino-acid polypeptide reads, in one-letter code: SUPPRESSOR OF ABI3-5 (1007 aa).

Disordered regions lie at residues 1–185 (MDPS…RDRE) and 204–269 (ESPH…FSAT). Basic and acidic residues-rich tracts occupy residues 40–49 (PDERLMRDDV), 94–120 (YYHDSEAGSRNGHYRDHEHERSSRYDG), 138–185 (HSRD…RDRE), and 204–214 (ESPHKRYEKSR). Over residues 227 to 236 (RSPRGRSHGR) the composition is skewed to basic residues. Basic and acidic residues predominate over residues 237 to 264 (SYREDSYEGDHWNESERRREYEDRHNQD). The region spanning 272–352 (ATVVVKGLSM…RKLMFHYSQP (81 aa)) is the RRM 1 domain. Residues 378–407 (VPTDWICTICGCINFARRTSCFQCNEPKTK) form a RanBP2-type zinc finger. One can recognise an RRM 2 domain in the interval 432–512 (HVLVVRGLDE…KILRVAYAKS (81 aa)). 6 disordered regions span residues 556–581 (GEKQNTGGQAQGVGEIESQKGTSAPQ), 631–656 (PDQNNESKVTENQPDSAKKEKSSQQK), 725–755 (HETQIQRPSPSLGDNPPTVSAEARSSFSTGQ), 771–797 (STSNHGVSALTTAESSSSSTTGGTLMG), 810–910 (ASSS…GITT), and 945–977 (SGLGKDGSGMKEPVQAQGVDRRAGLGSQQKKVD). The segment covering 631-645 (PDQNNESKVTENQPD) has biased composition (polar residues). Low complexity-rich tracts occupy residues 778–793 (SALTTAESSSSSTTGG) and 823–835 (PSASPASVSVSGS). Positions 849-867 (THREQPQTSYRDRAAERRN) are enriched in basic and acidic residues. The 47-residue stretch at 928–974 (ESNVGNRMLRNMGWHEGSGLGKDGSGMKEPVQAQGVDRRAGLGSQQK) folds into the G-patch domain.

As to quaternary structure, interacts with the pre-spliceosomal component U2AF65A. Ubiquitous with highest expression in siliques toward the end of seed maturation.

The protein resides in the nucleus. Splicing factor that controls alternative splicing of the developmental regulator ABI3. Reduces splicing of a cryptic intron in ABI3, leading to a decreased in ABI3-beta transcript. Regulates the splicing of the receptor-like kinase SNC4/LRKL-2.6. The polypeptide is SUPPRESSOR OF ABI3-5 (Arabidopsis thaliana (Mouse-ear cress)).